A 114-amino-acid chain; its full sequence is Small ribosomal subunit protein bS16 (114 aa).

The disordered stretch occupies residues 87 to 114 (AFREQPVQSAPKKKAQERAAERAKAAEA). Residues 100–114 (KAQERAAERAKAAEA) are compositionally biased toward basic and acidic residues.

The protein belongs to the bacterial ribosomal protein bS16 family.

The sequence is that of Small ribosomal subunit protein bS16 from Acidiphilium cryptum (strain JF-5).